A 485-amino-acid chain; its full sequence is Protein nucleotidyltransferase YdiU (485 aa).

ATP is bound by residues G90, G92, R93, K113, D125, G126, R176, and R183. D252 serves as the catalytic Proton acceptor. Mg(2+) is bound by residues N253 and D262. D262 is an ATP binding site.

This sequence belongs to the SELO family. Requires Mg(2+) as cofactor. Mn(2+) is required as a cofactor.

It carries out the reaction L-seryl-[protein] + ATP = 3-O-(5'-adenylyl)-L-seryl-[protein] + diphosphate. The enzyme catalyses L-threonyl-[protein] + ATP = 3-O-(5'-adenylyl)-L-threonyl-[protein] + diphosphate. It catalyses the reaction L-tyrosyl-[protein] + ATP = O-(5'-adenylyl)-L-tyrosyl-[protein] + diphosphate. The catalysed reaction is L-histidyl-[protein] + UTP = N(tele)-(5'-uridylyl)-L-histidyl-[protein] + diphosphate. It carries out the reaction L-seryl-[protein] + UTP = O-(5'-uridylyl)-L-seryl-[protein] + diphosphate. The enzyme catalyses L-tyrosyl-[protein] + UTP = O-(5'-uridylyl)-L-tyrosyl-[protein] + diphosphate. Its function is as follows. Nucleotidyltransferase involved in the post-translational modification of proteins. It can catalyze the addition of adenosine monophosphate (AMP) or uridine monophosphate (UMP) to a protein, resulting in modifications known as AMPylation and UMPylation. The protein is Protein nucleotidyltransferase YdiU of Aliivibrio fischeri (strain MJ11) (Vibrio fischeri).